The chain runs to 282 residues: Putative SLC9B1-like protein SLC9B1P1 (282 aa).

The next 7 helical transmembrane spans lie at 27–47 (LLAI…GGMI), 51–71 (IASL…GFFV), 87–107 (GFLV…IGLH), 135–155 (IITN…GAEV), 174–194 (LALC…GFSF), 198–218 (IFIA…GPLA), and 239–259 (VAFL…GILG).

It belongs to the monovalent cation:proton antiporter 1 (CPA1) transporter (TC 2.A.36) family.

Its subcellular location is the membrane. The chain is Putative SLC9B1-like protein SLC9B1P1 (SLC9B1P1) from Homo sapiens (Human).